Reading from the N-terminus, the 500-residue chain is Proline--tRNA ligase (500 aa).

This sequence belongs to the class-II aminoacyl-tRNA synthetase family. ProS type 3 subfamily. Homodimer.

The protein localises to the cytoplasm. It carries out the reaction tRNA(Pro) + L-proline + ATP = L-prolyl-tRNA(Pro) + AMP + diphosphate. In terms of biological role, catalyzes the attachment of proline to tRNA(Pro) in a two-step reaction: proline is first activated by ATP to form Pro-AMP and then transferred to the acceptor end of tRNA(Pro). The polypeptide is Proline--tRNA ligase (Paramagnetospirillum magneticum (strain ATCC 700264 / AMB-1) (Magnetospirillum magneticum)).